The primary structure comprises 598 residues: UvrABC system protein C (598 aa).

Residues 14–91 form the GIY-YIG domain; that stretch reads DSPGCYLHKD…IQKNMPKYNI (78 aa). The 36-residue stretch at 196–231 folds into the UVR domain; it reads DKIIEDLRSKMLAASEEMAFERAAEYRDLISGIATM.

Belongs to the UvrC family. As to quaternary structure, interacts with UvrB in an incision complex.

The protein resides in the cytoplasm. The UvrABC repair system catalyzes the recognition and processing of DNA lesions. UvrC both incises the 5' and 3' sides of the lesion. The N-terminal half is responsible for the 3' incision and the C-terminal half is responsible for the 5' incision. The sequence is that of UvrABC system protein C from Streptococcus pyogenes serotype M6 (strain ATCC BAA-946 / MGAS10394).